Here is a 227-residue protein sequence, read N- to C-terminus: Probable GTP-binding protein EngB (227 aa).

The region spanning 41-216 is the EngB-type G domain; the sequence is GRPEVAFAGR…RAEIARFAVP (176 aa). GTP contacts are provided by residues 49 to 56, 76 to 80, 94 to 97, 161 to 164, and 195 to 197; these read GRSNVGKS, GRTKQ, DMPG, TKCD, and TSS. Mg(2+) contacts are provided by Ser-56 and Thr-78.

Belongs to the TRAFAC class TrmE-Era-EngA-EngB-Septin-like GTPase superfamily. EngB GTPase family. It depends on Mg(2+) as a cofactor.

In terms of biological role, necessary for normal cell division and for the maintenance of normal septation. This Gluconobacter oxydans (strain 621H) (Gluconobacter suboxydans) protein is Probable GTP-binding protein EngB.